Here is a 62-residue protein sequence, read N- to C-terminus: DNA-directed RNA polymerase subunit Rpo10 (62 aa).

Zn(2+) contacts are provided by C6, C9, C43, and C44.

It belongs to the archaeal Rpo10/eukaryotic RPB10 RNA polymerase subunit family. In terms of assembly, part of the RNA polymerase complex. Zn(2+) serves as cofactor.

Its subcellular location is the cytoplasm. The enzyme catalyses RNA(n) + a ribonucleoside 5'-triphosphate = RNA(n+1) + diphosphate. DNA-dependent RNA polymerase (RNAP) catalyzes the transcription of DNA into RNA using the four ribonucleoside triphosphates as substrates. The sequence is that of DNA-directed RNA polymerase subunit Rpo10 from Methanococcoides burtonii (strain DSM 6242 / NBRC 107633 / OCM 468 / ACE-M).